The primary structure comprises 593 residues: Root phototropism protein 2 (593 aa).

A BTB domain is found at 32 to 100 (TDVVVEVGEA…CYGVNFEITV (69 aa)). An NPH3 domain is found at 187 to 469 (NWWTEELCIL…LHALYYDQLK (283 aa)). Residue tyrosine 410 is modified to Phosphotyrosine.

It belongs to the NPH3 family. Interacts with RPT3 and PHOT1. Expressed in hypocotyls, guard cells and mesophyll cells.

The protein operates within protein modification; protein ubiquitination. Functionally, may act as a substrate-specific adapter of an E3 ubiquitin-protein ligase complex (CUL3-RBX1-BTB) which mediates the ubiquitination and subsequent proteasomal degradation of target proteins. Signal transducer of the phototropic response and photo-induced movements. Necessary for root phototropism. Involved in hypocotyl phototropism under high rate but not under low rate light. Regulates stomata opening. Seems to be not involved in chloroplast accumulation and translocation. The sequence is that of Root phototropism protein 2 (RPT2) from Arabidopsis thaliana (Mouse-ear cress).